We begin with the raw amino-acid sequence, 147 residues long: Testis-expressed protein 29 (147 aa).

The Extracellular portion of the chain corresponds to 1-57 (MRYAPEFKKSPSHLLKKFAVCDIPLYDICDYNVSRDRCKELGCCFYKGICYEKAVPS). Residues 58-78 (YVQVFSALIVIIAGAFVITII) traverse the membrane as a helical segment. Over 79–147 (YRVIQESRRE…IVTEEEETED (69 aa)) the chain is Cytoplasmic. The disordered stretch occupies residues 86-147 (RREKEVPTEA…IVTEEEETED (62 aa)). Over residues 99 to 108 (AKSSVQVETQ) the composition is skewed to polar residues. The segment covering 109–120 (PPSSAGAGSKAP) has biased composition (low complexity). Positions 125 to 135 (PQSKESGREDA) are enriched in basic and acidic residues.

It localises to the membrane. This is Testis-expressed protein 29 (TEX29) from Bos taurus (Bovine).